The following is a 412-amino-acid chain: Short-chain specific acyl-CoA dehydrogenase, mitochondrial (412 aa).

The transit peptide at 1–24 directs the protein to the mitochondrion; the sequence is MAAALLARASGPARRALCPRAWRQ. A Phosphothreonine modification is found at T27. K51 is modified (N6-acetyllysine; alternate). K51 carries the N6-succinyllysine; alternate modification. Residue K72 is modified to N6-acetyllysine. Position 129 is an N6-acetyllysine; alternate (K129). K129 carries the N6-succinyllysine; alternate modification. FAD contacts are provided by residues 152 to 161 and 185 to 187; these read FALSEPGNGS and WIT. Residue S161 coordinates substrate. K208 carries the post-translational modification N6-acetyllysine. K262 bears the N6-acetyllysine; alternate mark. N6-succinyllysine; alternate is present on K262. Residue 269–272 coordinates substrate; the sequence is DMGR. R297 serves as a coordination point for FAD. K306 is modified (N6-acetyllysine; alternate). Residue K306 is modified to N6-succinyllysine; alternate. FAD contacts are provided by residues Q308 and 365 to 369; that span reads QILGG. Residue E392 is the Proton acceptor of the active site. G393 serves as a coordination point for substrate. FAD is bound at residue 394–396; the sequence is TSE.

This sequence belongs to the acyl-CoA dehydrogenase family. Homotetramer. FAD serves as cofactor.

Its subcellular location is the mitochondrion matrix. It carries out the reaction a short-chain 2,3-saturated fatty acyl-CoA + oxidized [electron-transfer flavoprotein] + H(+) = a short-chain (2E)-enoyl-CoA + reduced [electron-transfer flavoprotein]. The catalysed reaction is butanoyl-CoA + oxidized [electron-transfer flavoprotein] + H(+) = (2E)-butenoyl-CoA + reduced [electron-transfer flavoprotein]. It catalyses the reaction pentanoyl-CoA + oxidized [electron-transfer flavoprotein] + H(+) = (2E)-pentenoyl-CoA + reduced [electron-transfer flavoprotein]. The enzyme catalyses hexanoyl-CoA + oxidized [electron-transfer flavoprotein] + H(+) = (2E)-hexenoyl-CoA + reduced [electron-transfer flavoprotein]. The protein operates within lipid metabolism; mitochondrial fatty acid beta-oxidation. Short-chain specific acyl-CoA dehydrogenase is one of the acyl-CoA dehydrogenases that catalyze the first step of mitochondrial fatty acid beta-oxidation, an aerobic process breaking down fatty acids into acetyl-CoA and allowing the production of energy from fats. The first step of fatty acid beta-oxidation consists in the removal of one hydrogen from C-2 and C-3 of the straight-chain fatty acyl-CoA thioester, resulting in the formation of trans-2-enoyl-CoA. Among the different mitochondrial acyl-CoA dehydrogenases, short-chain specific acyl-CoA dehydrogenase acts specifically on acyl-CoAs with saturated 4 to 6 carbons long primary chains. The chain is Short-chain specific acyl-CoA dehydrogenase, mitochondrial (ACADS) from Homo sapiens (Human).